We begin with the raw amino-acid sequence, 540 residues long: IQ motif and ankyrin repeat domain-containing protein 1 (540 aa).

Residues 1-17 (MSTKKGGPKAASGKGQA) show a composition bias toward low complexity. Residues 1–62 (MSTKKGGPKA…PQAPAAPTAE (62 aa)) form a disordered region. One can recognise an IQ domain in the interval 62 to 91 (EDKAAIVIQCAFRQYLARRELARRCQERQE). 2 ANK repeats span residues 191–220 (HGNT…NPNT) and 224–253 (FGRT…DPRM). Positions 281–388 (LTEAMLKNME…EETLAMARLE (108 aa)) form a coiled coil.

The sequence is that of IQ motif and ankyrin repeat domain-containing protein 1 from Mus musculus (Mouse).